A 176-amino-acid chain; its full sequence is uncharacterized protein (176 aa).

Residues 1-12 (MRLPYSSSKPIP) are compositionally biased toward polar residues. Disordered regions lie at residues 1-88 (MRLP…PQQQ) and 109-132 (VNNSPIKTPSKKHRSSSKKSPSSS). Low complexity predominate over residues 13–24 (TNNNNNNNNTNN). Positions 37–46 (SYYQTQENNK) are enriched in polar residues. A compositionally biased stretch (low complexity) spans 47-88 (PQQSQQHPLLQHQQQQQQQQQQQQQQQQQQQQQQQQQQPQQQ).

This is an uncharacterized protein from Dictyostelium discoideum (Social amoeba).